Here is a 274-residue protein sequence, read N- to C-terminus: 2,3,4,5-tetrahydropyridine-2,6-dicarboxylate N-succinyltransferase (274 aa).

This sequence belongs to the transferase hexapeptide repeat family.

The protein localises to the cytoplasm. It catalyses the reaction (S)-2,3,4,5-tetrahydrodipicolinate + succinyl-CoA + H2O = (S)-2-succinylamino-6-oxoheptanedioate + CoA. It participates in amino-acid biosynthesis; L-lysine biosynthesis via DAP pathway; LL-2,6-diaminopimelate from (S)-tetrahydrodipicolinate (succinylase route): step 1/3. In Alteromonas mediterranea (strain DSM 17117 / CIP 110805 / LMG 28347 / Deep ecotype), this protein is 2,3,4,5-tetrahydropyridine-2,6-dicarboxylate N-succinyltransferase.